The following is a 159-amino-acid chain: Phosphopantetheine adenylyltransferase (159 aa).

Serine 9 serves as a coordination point for substrate. Residues serine 9 to phenylalanine 10 and histidine 17 contribute to the ATP site. Lysine 41, leucine 73, and lysine 87 together coordinate substrate. Residues glycine 88 to arginine 90, glutamate 98, and tyrosine 123 to serine 129 each bind ATP.

Belongs to the bacterial CoaD family. In terms of assembly, homohexamer. Mg(2+) serves as cofactor.

It localises to the cytoplasm. The enzyme catalyses (R)-4'-phosphopantetheine + ATP + H(+) = 3'-dephospho-CoA + diphosphate. It participates in cofactor biosynthesis; coenzyme A biosynthesis; CoA from (R)-pantothenate: step 4/5. Reversibly transfers an adenylyl group from ATP to 4'-phosphopantetheine, yielding dephospho-CoA (dPCoA) and pyrophosphate. This chain is Phosphopantetheine adenylyltransferase, found in Clostridium botulinum (strain Eklund 17B / Type B).